The sequence spans 117 residues: Large ribosomal subunit protein bL19 (117 aa).

This sequence belongs to the bacterial ribosomal protein bL19 family.

This protein is located at the 30S-50S ribosomal subunit interface and may play a role in the structure and function of the aminoacyl-tRNA binding site. The polypeptide is Large ribosomal subunit protein bL19 (Bacteroides fragilis (strain ATCC 25285 / DSM 2151 / CCUG 4856 / JCM 11019 / LMG 10263 / NCTC 9343 / Onslow / VPI 2553 / EN-2)).